Here is a 305-residue protein sequence, read N- to C-terminus: Olfactory receptor 4F4 (305 aa).

The Extracellular segment spans residues 1–18 (MVTEFIFLGLSDSQELQT). A helical transmembrane segment spans residues 19–42 (FLFMLFFVFYGGIVFGNLLIVITV). The Cytoplasmic portion of the chain corresponds to 43–50 (VSDSHLHS). The helical transmembrane segment at 51–72 (PMYFLLANLSLIDLSLSSVTAP) threads the bilayer. The Extracellular segment spans residues 73–93 (KMITDFFSQRKVISFKGCLVQ). A disulfide bond links Cys-90 and Cys-182. The chain crosses the membrane as a helical span at residues 94 to 113 (IFLLHFFGGSEMVILIAMGF). Residues 114–132 (DRYIAICKPLHYTTIMCGN) are Cytoplasmic-facing. A helical transmembrane segment spans residues 133–151 (ACVGIMAVAWGIGFLHSVS). Over 152–188 (QLAFAVHLPFCGPNEVDSFYCDLPRVIKLACTDTYRL) the chain is Extracellular. The chain crosses the membrane as a helical span at residues 189–212 (DIMVIANSGVLTVCSFVLLIISYT). The Cytoplasmic segment spans residues 213 to 228 (IILMTIQHCPLDKSSK). A helical membrane pass occupies residues 229 to 251 (ALSTLTAHITVVLLFFGPCVFIY). Residues 252–262 (AWPFPIKSLDK) are Extracellular-facing. Residues 263–282 (FLAVFYSVITPLLNPIIYTL) form a helical membrane-spanning segment. Residues 283 to 305 (RNKDMKTAIRRLRKWDAHSSVKF) are Cytoplasmic-facing.

Belongs to the G-protein coupled receptor 1 family.

The protein localises to the cell membrane. In terms of biological role, odorant receptor. In Homo sapiens (Human), this protein is Olfactory receptor 4F4 (OR4F4).